The chain runs to 165 residues: Protein SprT (165 aa).

In terms of domain architecture, SprT-like spans 20 to 163 (EKLAQANLKL…RCVHCGEQLV (144 aa)). H78 lines the Zn(2+) pocket. The active site involves E79. A Zn(2+)-binding site is contributed by H82.

This sequence belongs to the SprT family. Requires Zn(2+) as cofactor.

It is found in the cytoplasm. The sequence is that of Protein SprT from Shigella flexneri serotype 5b (strain 8401).